The sequence spans 326 residues: Protein TMED8 (326 aa).

Residues 1 to 99 are disordered; the sequence is MSDRQAAEGP…EGQAPGEQAA (99 aa). Positions 50–65 are enriched in low complexity; the sequence is SSPLASASDPAAESSP. Positions 160 to 324 constitute a GOLD domain; sequence PPCVWTFAKV…NKTLYFHIYY (165 aa). K170 bears the N6-acetyllysine mark. Positions 234 to 268 are disordered; the sequence is VQVSDSSEDEEEEEDEEEEIEEPVPVGDVERGSRS. A compositionally biased stretch (acidic residues) spans 239–255; sequence SSEDEEEEEDEEEEIEE.

This chain is Protein TMED8 (Tmed8), found in Mus musculus (Mouse).